The following is a 129-amino-acid chain: Putative redox protein FMP46, mitochondrial (129 aa).

The transit peptide at 1–21 (MSMFRTLQRQPRTISLFTHDL) directs the protein to the mitochondrion. The active site involves Cys94.

This sequence belongs to the FMP46 family.

Its subcellular location is the mitochondrion. Functionally, putative mitochondrial redox protein which could be involved in the reduction of small toxic molecules. The sequence is that of Putative redox protein FMP46, mitochondrial (FMP46) from Candida glabrata (strain ATCC 2001 / BCRC 20586 / JCM 3761 / NBRC 0622 / NRRL Y-65 / CBS 138) (Yeast).